The following is a 193-amino-acid chain: Probable type II restriction enzyme HpyAORF263P (193 aa).

The protein belongs to the BsaWI type II restriction endonuclease family.

It catalyses the reaction Endonucleolytic cleavage of DNA to give specific double-stranded fragments with terminal 5'-phosphates.. Functionally, a P subtype probable restriction enzyme that recognizes the double-stranded sequence CCGG; the cleavage site is unknown. The polypeptide is Probable type II restriction enzyme HpyAORF263P (Helicobacter pylori (strain ATCC 700392 / 26695) (Campylobacter pylori)).